Here is a 196-residue protein sequence, read N- to C-terminus: Ribosome maturation factor RimP (196 aa).

The interval 176-196 (ETNFDEVSTELETDTPSEGDQ) is disordered. A compositionally biased stretch (acidic residues) spans 177 to 196 (TNFDEVSTELETDTPSEGDQ).

The protein belongs to the RimP family.

It localises to the cytoplasm. In terms of biological role, required for maturation of 30S ribosomal subunits. The polypeptide is Ribosome maturation factor RimP (Roseobacter denitrificans (strain ATCC 33942 / OCh 114) (Erythrobacter sp. (strain OCh 114))).